Here is a 341-residue protein sequence, read N- to C-terminus: MRHLTLALDIMGGDNGPHIILSAALKALNEFPHLNLIFCGDEDVITSWLNQHSSSLSNRYSIVHCNQQVLMDDNPVKALRHKKDSSMACAIKHVHNEQADACVSAGNTGALLAMACSQLKTLSGVNRPALVSSLPTAKGHKVYLLDLGATVQSDAQTLLQNAVMGSVLAEQIAGIERPRVAILNVGEEQIKGPANIKEASQLLAASDHLNYIGFVEGDDIFNDIADVIVTDGFSGNIALKSCEGLVKLLIEQVKRDAKRNILSKIMAKLAMPLLRRLYLRVNPDQYNGASLIGLRGIVVKSHGNASDEAFLYAIREAVQEAERQVPTKIKDKIENLLMERS.

This sequence belongs to the PlsX family. In terms of assembly, homodimer. Probably interacts with PlsY.

The protein localises to the cytoplasm. It carries out the reaction a fatty acyl-[ACP] + phosphate = an acyl phosphate + holo-[ACP]. The protein operates within lipid metabolism; phospholipid metabolism. Functionally, catalyzes the reversible formation of acyl-phosphate (acyl-PO(4)) from acyl-[acyl-carrier-protein] (acyl-ACP). This enzyme utilizes acyl-ACP as fatty acyl donor, but not acyl-CoA. This Pseudoalteromonas atlantica (strain T6c / ATCC BAA-1087) protein is Phosphate acyltransferase.